The sequence spans 407 residues: TOM1-like protein 1 (407 aa).

N-acetylglycine is present on glycine 2. Positions 55-183 (ATTENLEEPD…SLKARGIRFP (129 aa)) constitute a VHS domain. Residues 228–315 (FTAEQTKEAF…TLSKYEEMNK (88 aa)) enclose the GAT domain. A disordered region spans residues 315–407 (KPSAPLTSHE…SSKNDDLIRF (93 aa)). A Phosphoserine modification is found at serine 337. Positions 337–347 (SPIHGREESLV) are enriched in basic and acidic residues. A compositionally biased stretch (gly residues) spans 353–364 (VRGGFHGGGGSG). Basic and acidic residues predominate over residues 388–407 (PDHDPKKEQSSSKNDDLIRF).

Belongs to the TOM1 family. As to expression, ubiquitously expressed.

The protein resides in the membrane. Functionally, might contribute to the loading of the ESCRT machinery. In Arabidopsis thaliana (Mouse-ear cress), this protein is TOM1-like protein 1.